Reading from the N-terminus, the 154-residue chain is Low molecular weight protein-tyrosine-phosphatase PtpA (154 aa).

Residue Cys8 is the Nucleophile of the active site. The active site involves Arg14. Catalysis depends on Asp120, which acts as the Proton donor.

This sequence belongs to the low molecular weight phosphotyrosine protein phosphatase family.

The enzyme catalyses O-phospho-L-tyrosyl-[protein] + H2O = L-tyrosyl-[protein] + phosphate. Functionally, dephosphorylates the phosphotyrosine-containing proteins. The protein is Low molecular weight protein-tyrosine-phosphatase PtpA (ptpA) of Staphylococcus epidermidis (strain ATCC 35984 / DSM 28319 / BCRC 17069 / CCUG 31568 / BM 3577 / RP62A).